The following is a 234-amino-acid chain: Protein-toxin resistance protein KTD1 (234 aa).

The Cytoplasmic portion of the chain corresponds to Met-1–His-47. A helical transmembrane segment spans residues Cys-48 to Phe-68. Residues Phe-68–Thr-75 are required for resistance to killer toxin K28, a protein-toxin encoded by the M28 virus. The Extracellular segment spans residues His-69–Val-76. Residues Ile-77–Phe-97 form a helical membrane-spanning segment. The Cytoplasmic segment spans residues Gly-98 to Pro-234. The required for resistance to killer toxin K28, a protein-toxin encoded by the M28 virus stretch occupies residues Phe-147 to Pro-234. The tract at residues Ser-168 to Gly-187 is disordered. Residues Ala-177–Gly-187 are compositionally biased toward polar residues. Lys-217 is covalently cross-linked (Glycyl lysine isopeptide (Lys-Gly) (interchain with G-Cter in ubiquitin)).

This sequence belongs to the DUP/COS family.

It is found in the vacuole membrane. It localises to the golgi apparatus. The protein resides in the trans-Golgi network membrane. The protein localises to the endosome membrane. Functionally, confers resistance to killer toxin K28, a protein-toxin encoded by the M28 virus that uses S.cerevisiae as a host. Probably acts against K28 after endocytosis of the protein-toxin. This Saccharomyces cerevisiae (strain ATCC 204508 / S288c) (Baker's yeast) protein is Protein-toxin resistance protein KTD1.